A 138-amino-acid chain; its full sequence is Large ribosomal subunit protein uL16 (138 aa).

Basic residues predominate over residues 1 to 13 (MLQPARRKYRKEQ). The tract at residues 1–20 (MLQPARRKYRKEQKGRNTGV) is disordered.

Belongs to the universal ribosomal protein uL16 family. In terms of assembly, part of the 50S ribosomal subunit.

In terms of biological role, binds 23S rRNA and is also seen to make contacts with the A and possibly P site tRNAs. The polypeptide is Large ribosomal subunit protein uL16 (Verminephrobacter eiseniae (strain EF01-2)).